The chain runs to 177 residues: Large ribosomal subunit protein uL6 (177 aa).

Belongs to the universal ribosomal protein uL6 family. In terms of assembly, part of the 50S ribosomal subunit.

In terms of biological role, this protein binds to the 23S rRNA, and is important in its secondary structure. It is located near the subunit interface in the base of the L7/L12 stalk, and near the tRNA binding site of the peptidyltransferase center. This chain is Large ribosomal subunit protein uL6, found in Stutzerimonas stutzeri (strain A1501) (Pseudomonas stutzeri).